A 348-amino-acid chain; its full sequence is Dihydroorotase (348 aa).

Histidine 17 and histidine 19 together coordinate Zn(2+). Substrate is bound by residues 19-21 and asparagine 45; that span reads HLR. Zn(2+)-binding residues include lysine 103, histidine 140, and histidine 178. N6-carboxylysine is present on lysine 103. Histidine 140 contributes to the substrate binding site. Leucine 223 contributes to the substrate binding site. Aspartate 251 provides a ligand contact to Zn(2+). Aspartate 251 is an active-site residue. Positions 255 and 267 each coordinate substrate.

The protein belongs to the metallo-dependent hydrolases superfamily. DHOase family. Class II DHOase subfamily. Homodimer. It depends on Zn(2+) as a cofactor.

The enzyme catalyses (S)-dihydroorotate + H2O = N-carbamoyl-L-aspartate + H(+). Its pathway is pyrimidine metabolism; UMP biosynthesis via de novo pathway; (S)-dihydroorotate from bicarbonate: step 3/3. Its function is as follows. Catalyzes the reversible cyclization of carbamoyl aspartate to dihydroorotate. The chain is Dihydroorotase from Salmonella newport (strain SL254).